Here is a 98-residue protein sequence, read N- to C-terminus: Large ribosomal subunit protein eL21 (98 aa).

Residues 1–23 form a disordered region; that stretch reads MVDRKGKGFRRKTRDKLSKHPRQ. A compositionally biased stretch (basic residues) spans 7 to 23; it reads KGFRRKTRDKLSKHPRQ.

It belongs to the eukaryotic ribosomal protein eL21 family.

The protein is Large ribosomal subunit protein eL21 of Nanoarchaeum equitans (strain Kin4-M).